Here is a 764-residue protein sequence, read N- to C-terminus: Phenylalanine--tRNA ligase beta subunit (764 aa).

One can recognise a tRNA-binding domain in the interval 38 to 148 (CIAPKNVVVG…GELVLGKELH (111 aa)). One can recognise a B5 domain in the interval 375–455 (LKDCALTFQL…RFVGIDNLVS (81 aa)). Positions 433, 439, 442, and 443 each coordinate Mg(2+). The FDX-ACB domain occupies 673–763 (SIYPSSVRDL…LEKEFNARLK (91 aa)).

This sequence belongs to the phenylalanyl-tRNA synthetase beta subunit family. Type 1 subfamily. As to quaternary structure, tetramer of two alpha and two beta subunits. Mg(2+) serves as cofactor.

It is found in the cytoplasm. The enzyme catalyses tRNA(Phe) + L-phenylalanine + ATP = L-phenylalanyl-tRNA(Phe) + AMP + diphosphate + H(+). This is Phenylalanine--tRNA ligase beta subunit (pheT) from Helicobacter pylori (strain J99 / ATCC 700824) (Campylobacter pylori J99).